The sequence spans 63 residues: Conotoxin p5a (63 aa).

The first 19 residues, 1–19 (MRCLPVFVILLLLIPSAPC), serve as a signal peptide directing secretion. The propeptide occupies 20–50 (VDAHPKTKDDMPLASFHDNAKGTLQRFWKKR). 2 disulfide bridges follow: cysteine 52–cysteine 59 and cysteine 53–cysteine 60. Leucine 62 carries the post-translational modification Leucine amide.

Expressed by the venom duct.

It localises to the secreted. Functionally, in vivo, low levels of the peptide injected into male specimens of the Siamese fighting fish causes an immediate aggressive display in this fish in response to their reflection when placed in a mirrored aquarium; High levels of the peptide suppressed this behavior. No effect is observed when injected into mice. The sequence is that of Conotoxin p5a from Conus purpurascens (Purple cone).